Reading from the N-terminus, the 387-residue chain is Odorant receptor 19a (387 aa).

The Cytoplasmic segment spans residues 1-40 (MDISKVDSTRALVNHWRIFRIMGIHPPGKRTFWGRHYTAY). Residues 41 to 61 (SMVWNVTFHICIWVSFSVNLL) form a helical membrane-spanning segment. Topologically, residues 62–71 (QSNSLETFCE) are extracellular. The chain crosses the membrane as a helical span at residues 72–92 (SLCVTMPHTLYMLKLINVRRM). Topologically, residues 93–127 (RGQMISSHWLLRLLDKRLGCDDERQIIMAGIERAE) are cytoplasmic. A helical transmembrane segment spans residues 128 to 148 (FIFRTIFRGLACTVVLGIIYI). At 149 to 171 (SASSEPTLMYPTWIPWNWRDSTS) the chain is on the extracellular side. A helical membrane pass occupies residues 172–192 (AYLATAMLHTTALMANATLVL). The Cytoplasmic segment spans residues 193–254 (NLSSYPGTYL…LRLFKSLERS (62 aa)). The helical transmembrane segment at 255-275 (LSMTCFLQFFSTACAQCTICY) threads the bilayer. Residues 276–285 (FLLFGNVGIM) are Extracellular-facing. A helical transmembrane segment spans residues 286-306 (RFMNMLFLLVILTTETLLLCY). Residues 307-336 (TAELPCKEGESLLTAVYSCNWLSQSVNFRR) are Cytoplasmic-facing. A helical membrane pass occupies residues 337-357 (LLLLMLARCQIPMILVSGVIV). Over 358 to 387 (PISMKTFTVMIKGAYTMLTLLNEIRKTSLE) the chain is Extracellular.

The protein belongs to the insect chemoreceptor superfamily. Heteromeric odorant receptor channel (TC 1.A.69) family. Or2a subfamily. As to quaternary structure, interacts with Orco. Complexes exist early in the endomembrane system in olfactory sensory neurons (OSNs), coupling these complexes to the conserved ciliary trafficking pathway. In terms of tissue distribution, expressed in ai2A olfactory sensory neurons in the antenna.

It localises to the cell membrane. In terms of biological role, odorant receptor which mediates acceptance or avoidance behavior, depending on its substrates. The odorant receptor repertoire encodes a large collection of odor stimuli that vary widely in identity, intensity, and duration. May form a complex with Orco to form odorant-sensing units, providing sensitive and prolonged odorant signaling and calcium permeability. Involved in the preference for citrus fruits for oviposition, especially through the response to valencene, the primary ligand of Or19a. Larvae growing on citrus fruits suffer a reduced risk of parasitism since endoparasitoid wasps that parasitize larvae are strongly repelled by the smell of citrus, as well as by valencene. This chain is Odorant receptor 19a (Or19a), found in Drosophila melanogaster (Fruit fly).